Consider the following 462-residue polypeptide: Ubiquitin carboxyl-terminal hydrolase calypso (462 aa).

One can recognise a UCH catalytic domain in the interval 29 to 260 (GWLELESDPG…IRFNLMAVVP (232 aa)). Cysteine 115 functions as the Nucleophile in the catalytic mechanism. Histidine 197 functions as the Proton donor in the catalytic mechanism. In terms of domain architecture, ULD spans 357-385 (NYDKFICTFLSMLAHQGVLGELVSQHLLP). The segment at 387–462 (KKIANRLNRQ…KGRNKCRKRK (76 aa)) is positively charged C-terminal tail required for binding nucleosomes. Residues 413–447 (GTNAAGSKSQQQQQQTQQQPQQTQTAKNGKSPGKT) show a composition bias toward low complexity. The disordered stretch occupies residues 413–462 (GTNAAGSKSQQQQQQTQQQPQQTQTAKNGKSPGKTPGRRRKGRNKCRKRK). The span at 448-462 (PGRRRKGRNKCRKRK) shows a compositional bias: basic residues.

The protein belongs to the peptidase C12 family. BAP1 subfamily. As to quaternary structure, catalytic component of the polycomb repressive deubiquitinase (PR-DUB) complex, at least composed of caly/calypso, Asx and sba (MBD5/6 homolog). The PR-DUB complex associates with nucleosomes to mediate deubiquitination of histone H2AK118ub1 substrates; the association requires the positively charged C-terminal tail of caly, probably due to direct binding of DNA. Interacts (via ULD domain) with Asx (via DEUBAD domain); the interaction produces a stable heterodimer with a composite binding site for ubiquitin. Homodimerizes (via coiled-coil hinge-region between the UCH and ULD domains) to mediate assembly of 2 copies of the caly-Asx heterodimer into a bisymmetric tetramer; dimerization enhances PR-DUB association with nucleosomes.

Its subcellular location is the nucleus. It carries out the reaction Thiol-dependent hydrolysis of ester, thioester, amide, peptide and isopeptide bonds formed by the C-terminal Gly of ubiquitin (a 76-residue protein attached to proteins as an intracellular targeting signal).. Its function is as follows. Catalytic component of the polycomb repressive deubiquitinase (PR-DUB) complex, a complex that specifically mediates deubiquitination of histone H2A monoubiquitinated at 'Lys-119' (H2AK118ub1). Mediates bisymmetric organization of the PR-DUB complex and is involved in association with nucleosomes to mediate deubiquitination. Does not deubiquitinate monoubiquitinated histone H2B. Required to maintain the transcriptionally repressive state of homeotic genes throughout development. The PR-DUB complex has weak or no activity toward 'Lys-48'- and 'Lys-63'-linked polyubiquitin chains. Polycomb group (PcG) protein. This Drosophila grimshawi (Hawaiian fruit fly) protein is Ubiquitin carboxyl-terminal hydrolase calypso.